We begin with the raw amino-acid sequence, 60 residues long: Single-pass membrane and coiled-coil domain-containing protein 4 homolog (60 aa).

The disordered stretch occupies residues 1–21; that stretch reads MRKLRGGQTKETRKQKQERRE. The segment covering 8–21 has biased composition (basic and acidic residues); that stretch reads QTKETRKQKQERRE. Residues 10–33 are a coiled coil; that stretch reads KETRKQKQERREENLKIQQQLKTI. The chain crosses the membrane as a helical span at residues 32 to 52; it reads TIVLPICGVFLMCIVVYVFLK.

The protein belongs to the SMCO4 family.

It localises to the membrane. The polypeptide is Single-pass membrane and coiled-coil domain-containing protein 4 homolog (Aedes aegypti (Yellowfever mosquito)).